The chain runs to 982 residues: MTLLEQRAVEASSIQSSPFLVRHIGPSFEDQQQMLLELGHRDLQSFVAAVVPPDILETTAPTSSLPEGCGEVQAMEELRLIAAANRVRRSLIGLGYYGTATPALIQRQVLENPAWYTAYTPYQAEISQGRLEALFNFQTLISELTGLPIANASLLDEGTAAAEAMSLSFAICKRPQAHRFLVDAEVLPQTLAVLRTRAEPLGIHLEVAEPMTFQFDAEVFGVLLQLPGRSGRLWDPTTSIQAAHEVGALATVAIDPLAQVLIAPVAEFGADIAVGSVQRFGVPMAFGGPHAAFFATLEIFKRQVPGRLVGQSVDAEGQPALRLALQTREQHIRRDKATSNICTAQVLLAVMASFYAVHHGPDGLAAIARRVLLLRAQLERGLHQLGYPVQSIARFDTIEVICREAPAVHQAAALAGFNLRVLPLGVAPEAAHGFGISFDELSTDQELKSILQILAEAAGQPVPVLEDLGNPHLEELVGLPLRQRPWLQQQVFHRYRSETELLRYLQRLVGRDLSLVHGMIPLGSCTMKLNAAAELIPISWREFAALHPFAPQDQCHGYQRLVQDLEHWFAEITGFAGVSLQPNAGSQGELAGLLVIRAWHHSRGEQQRDVCLIPTSAHGTNPATCVMAGLRVVPVACDAEGNVDLNDLASKAEAHAPQLAALMVTYPSTHGVFEPQIREICELVHGHGGQVYLDGANLNAQIGFCRPGTYGADVCHINLHKTFCIPHGGGGPGVGPIAVAAHLMPFLPGHPLAACGGEQGIGAISAAPWGSAGILPISWMYLRMMGAEGLRQASAVALLSANYLAHRLHPHYPVLFRGQAGLVAHECILDLRPLKRSAGLEVDDIAKRLMDYGFHAPTVSWPVAGTVMVEPTESESLEELNRFCDAMIAIREETAAIESGQIDPQNNPLRRAPHTLAAVTAEVWDRPYSRAEAAFPLAEQRQSKFWPAVSRIDNAYGDRNLLCSCPSVEELADNSVLKPPLV.

Residue K721 is modified to N6-(pyridoxal phosphate)lysine.

Belongs to the GcvP family. In terms of assembly, the glycine cleavage system is composed of four proteins: P, T, L and H. Pyridoxal 5'-phosphate serves as cofactor.

The catalysed reaction is N(6)-[(R)-lipoyl]-L-lysyl-[glycine-cleavage complex H protein] + glycine + H(+) = N(6)-[(R)-S(8)-aminomethyldihydrolipoyl]-L-lysyl-[glycine-cleavage complex H protein] + CO2. Its function is as follows. The glycine cleavage system catalyzes the degradation of glycine. The P protein binds the alpha-amino group of glycine through its pyridoxal phosphate cofactor; CO(2) is released and the remaining methylamine moiety is then transferred to the lipoamide cofactor of the H protein. The protein is Glycine dehydrogenase (decarboxylating) of Prochlorococcus marinus (strain MIT 9303).